A 45-amino-acid chain; its full sequence is DQGTACTGEHAHNFCLNGGTCRHIQSLGEYYCICPEGYTGHRCEK.

The EGF-like domain maps to 2–44 (QGTACTGEHAHNFCLNGGTCRHIQSLGEYYCICPEGYTGHRCE). Cystine bridges form between cysteine 6-cysteine 21, cysteine 15-cysteine 32, and cysteine 34-cysteine 43.

It localises to the secreted. The protein resides in the nematocyst. Functionally, has both toxic and EGF activity. This Bunodosoma caissarum (Sea anemone) protein is Toxin Bcs III 15.09.